The sequence spans 297 residues: 4-hydroxy-tetrahydrodipicolinate synthase (297 aa).

Threonine 45 is a pyruvate binding site. Tyrosine 133 acts as the Proton donor/acceptor in catalysis. The active-site Schiff-base intermediate with substrate is the lysine 161. Isoleucine 203 is a pyruvate binding site.

The protein belongs to the DapA family. As to quaternary structure, homotetramer; dimer of dimers.

The protein resides in the cytoplasm. The enzyme catalyses L-aspartate 4-semialdehyde + pyruvate = (2S,4S)-4-hydroxy-2,3,4,5-tetrahydrodipicolinate + H2O + H(+). Its pathway is amino-acid biosynthesis; L-lysine biosynthesis via DAP pathway; (S)-tetrahydrodipicolinate from L-aspartate: step 3/4. Its function is as follows. Catalyzes the condensation of (S)-aspartate-beta-semialdehyde [(S)-ASA] and pyruvate to 4-hydroxy-tetrahydrodipicolinate (HTPA). The polypeptide is 4-hydroxy-tetrahydrodipicolinate synthase (Buchnera aphidicola subsp. Cinara cedri (strain Cc)).